The following is a 517-amino-acid chain: Putative pumilio homolog 21 (517 aa).

Disordered stretches follow at residues 33–57, 69–94, 107–130, and 175–201; these read NHQE…PPLL, KNNQ…PPLV, NHQE…PLLT, and FTPS…PPLS. A compositionally biased stretch (low complexity) spans 42–51; sequence NTNINSNNNH. Polar residues predominate over residues 69–84; that stretch reads KNNQEPGESGNTTINR. Positions 148-502 constitute a PUM-HD domain; sequence ESSNNNYPNL…NTLRVIQEEI (355 aa). The span at 177-190 shows a compositional bias: polar residues; it reads PSSLTQPDDSSSRY. Residues 258 to 293 form a Pumilio 1; degenerate repeat; sequence TTKRIFLHLATNQYGSQALRILFRRSPSLDHLLFCA. A Pumilio 2 repeat occupies 294–328; it reads VDTNFFLLMSDKYGRGLIIPAIRAVDKTKKESLYK. The Pumilio 3; degenerate repeat unit spans residues 329–363; it reads LTYEYTLHLARLETGCLALNNVLQEIRGIYRDLIF. Pumilio repeat units lie at residues 364–400, 401–437, and 438–473; these read ECVA…AIAE, RLRG…EEFR, and GNAK…PLLR.

The protein resides in the cytoplasm. Sequence-specific RNA-binding protein that regulates translation and mRNA stability by binding the 3'-UTR of target mRNAs. In Arabidopsis thaliana (Mouse-ear cress), this protein is Putative pumilio homolog 21 (APUM21).